The primary structure comprises 443 residues: POU domain, class 3, transcription factor 3-B (443 aa).

Disordered stretches follow at residues 21-40 (IVHS…VTSV), 100-150 (SPWS…AGAW), and 182-244 (NGML…PTSD). A compositionally biased stretch (polar residues) spans 101 to 121 (PWSSSPVGMTGSPQQQDVKNN). Positions 210–225 (SHHHHHHHQHQHHQQA) are enriched in basic residues. Residues 238–312 (EDTPTSDDLE…LLNKWLEEAD (75 aa)) enclose the POU-specific domain. Position 317 is a phosphoserine (Ser-317). Residues 330-389 (KRKKRTSIEVSVKGALESHFLKCPKPSAQEITSLADNLQLEKEVVRVWFCNRRQKEKRMT) constitute a DNA-binding region (homeobox).

It belongs to the POU transcription factor family. Class-3 subfamily. In terms of tissue distribution, predominantly expressed in the central nervous system.

The protein localises to the nucleus. In terms of biological role, transcription factor that may play important roles in patterning the embryonic brain. This chain is POU domain, class 3, transcription factor 3-B (pou3f3b), found in Danio rerio (Zebrafish).